Consider the following 1464-residue polypeptide: MGRVGYWTLLVLPALLVWRGPAPSAAAEKGPPALNIAVMLGHSHDVTERELRTLWGPEQAAGLPLDVNVVALLMNRTDPKSLITHVCDLMSGARIHGLVFGDDTDQEAVAQMLDFISSHTFVPILGIHGGASMIMNDKDPTSTFFQFGASIQQQATVMLKIMQDYDWHVFSLVTTIFPGYREFISFVKTTVDNSFVGWDMQNVITLDTSFEDAKTQVQLKKIHSSVILLYCSKDEAVLILSEARSLGLTGYDFFWIVPSLVSGNTELIPKEFPSGLISVSYDDWDYSLEARVRDGIGILTTAASSMLEKFSYIPEAKASCYGQMERPEVPMHTLHPFMVNVTWDGKDLSFTEEGYQVHPRLVVIVLNKDREWEKVGKWENHTLSLRHAVWPRYKSFSDCEPDDNHLSIVTLEEAPFVIVEDIDPLTETCVRNTVPCRKFVKINNSTNEGMNVKKCCKGFCIDILKKLSRTVKFTYDLYLVTNGKHGKKVNNVWNGMIGEVVYQRAVMAVGSLTINEERSEVVDFSVPFVETGISVMVSRSNGTVSPSAFLEPFSASVWVMMFVMLLIVSAIAVFVFEYFSPVGYNRNLAKGKAPHGPSFTIGKAIWLLWGLVFNNSVPVQNPKGTTSKIMVSVWAFFAVIFLASYTANLAAFMIQEEFVDQVTGLSDKKFQRPHDYSPPFRFGTVPNGSTERNIRNNYPYMHQYMTKFNQKGVEDALVSLKTGKLDAFIYDAAVLNYKAGRDEGCKLVTIGSGYIFATTGYGIALQKGSPWKRQIDLALLQFVGDGEMEELETLWLTGICHNEKNEVMSSQLDIDNMAGVFYMLAAAMALSLITFIWEHLFYWKLRFCFTGVCSDRPGLLFSISRGIYSCIHGVHIEEKKKSPDFNLTGSQSNMLKLLRSAKNISNMSNMNSSRMDSPKRAADFIQRGSLIMDMVSDKGNLMYSDNRSFQGKESIFGDNMNELQTFVANRQKDNLNNYVFQGQHPLTLNESNPNTVEVAVSTESKVNSRPRQLWKKSVDSIRQDSLSQNPVSQRDEATAENRTHSLKSPRYLPEEMAHSDISETSNRATCHREPDNSKNPKTKDNFKRSVASKYPKDCSEVERTYLKTKSSSPRDKIYTIDGEKEPGFHLDPPQFVENVTLPENVDFPDPYQDPSENLRKGDSTLPMNRNPLQNEEGLSNNDQYKLYSKHFTLKDKGSPHSETSERYRQNSTHCRSCLSNLPTYSGHFTMRSPFKCDACLRMGNLYDIDEDQMLQETGNPATGEQVYQQDWAQNNALQLQKNKLRISRQHSYDNIVDKPRELDLSRPSRSISLKDRERLLEGNFYGSLFSVPSSKLSGKKSSLFPQGLEDSKRSKSLLPDHTSDNPFLHSHRDDQRLVIGRCPSDPYKHSLPSQAVNDSYLRSSLRSTASYCSRDSRGHNDVYISEHVMPYAANKNNMYSTPRVLNSCSNRRVYKKMPSIESDV.

Residues Met1–Ala22 form the signal peptide. At Pro23–Ser556 the chain is on the extracellular side. His44 serves as a coordination point for Zn(2+). A glycan (N-linked (GlcNAc...) asparagine) is linked at Asn75. A disulfide bridge links Cys87 with Cys320. Residues His128, Glu266, and Asp282 each contribute to the Zn(2+) site. 4 N-linked (GlcNAc...) asparagine glycosylation sites follow: Asn340, Asn380, Asn443, and Asn444. Intrachain disulfides connect Cys429–Cys455 and Cys436–Cys456. 3 residues coordinate L-glutamate: Ser511, Thr513, and Arg518. A glycan (N-linked (GlcNAc...) asparagine) is linked at Asn541. The chain crosses the membrane as a helical span at residues Val557–Phe576. The Cytoplasmic portion of the chain corresponds to Glu577–Thr600. A pore-forming region spans residues Phe599 to Gln620. The segment at residues Ile601 to Asn615 is an intramembrane region (discontinuously helical). Residues Ser616–Thr625 lie on the Cytoplasmic side of the membrane. Residues Thr626–Thr646 form a helical membrane-spanning segment. At Ala647 to Ile814 the chain is on the extracellular side. Asn687 carries an N-linked (GlcNAc...) asparagine glycan. Positions 689, 690, and 731 each coordinate L-glutamate. A disulfide bridge connects residues Cys745 and Cys800. A helical membrane pass occupies residues Asp815–Phe835. Residues Ile836–Val1464 are Cytoplasmic-facing. Phosphoserine occurs at positions 882, 890, and 929. Composition is skewed to polar residues over residues Ser1001–Pro1010 and Gln1023–Ser1032. 2 disordered regions span residues Ser1001–Arg1088 and Pro1148–Asn1180. Ser1025 bears the Phosphoserine mark. 2 stretches are compositionally biased toward basic and acidic residues: residues Gln1033–Thr1043 and Leu1052–Ile1061. Ser1059 and Ser1062 each carry phosphoserine. Basic and acidic residues predominate over residues Cys1070 to Lys1087. Polar residues predominate over residues Leu1165 to Asn1180. Phosphoserine occurs at positions 1198 and 1291. Residues Lys1335–Arg1372 are disordered. The short motif at Ser1462–Val1464 is the PDZ-binding element.

The protein belongs to the glutamate-gated ion channel (TC 1.A.10.1) family. NR2A/GRIN2A subfamily. As to quaternary structure, heterotetramer. Forms heterotetrameric channels composed of two GluN1/zeta subunits (GRIN1), and two identical GluN2/epsilon subunits (GRIN2A, GRIN2B, GRIN2C or GRIN2D) or GluN3 subunits (GRIN3A or GRIN3B) (in vitro). Can also form heterotetrameric channels that contain at least two GluN1 subunits and at least two different GluN2 subunits (or a combination of one GluN2 and one GluN3 subunits) (in vitro). In vivo, the subunit composition may depend on the expression levels of the different subunits. Found in a complex with GRIN1, GRIN3A and PPP2CB. Found in a complex with GRIN1 and GRIN3B. Interacts with AIP1. Interacts with HIP1 and NETO1. Interacts with SNX27 (via PDZ domain); the interaction is required for recycling to the plasma membrane when endocytosed and prevent degradation in lysosomes. Interacts with PDZ domains of PATJ and DLG4. Interacts with LRFN2. Interacts with RPH3A and DLG4; this ternary complex regulates NMDA receptor composition at postsynaptic membranes. Interacts with SORCS2. Interacts with ARC; preventing ARC oligomerization. Interacts (via the extreme C-terminus) with FRMPD2 (the second PDZ domain); the interaction is direct and is likely to promote NMDAR-mediated neural signal transmission. GRIN2A binds FRMPD2 with lower affinity than GRIN2B.

It is found in the cell projection. The protein localises to the dendritic spine. The protein resides in the cell membrane. Its subcellular location is the synapse. It localises to the postsynaptic cell membrane. It is found in the cytoplasmic vesicle membrane. The catalysed reaction is Ca(2+)(in) = Ca(2+)(out). The enzyme catalyses Na(+)(in) = Na(+)(out). It carries out the reaction K(+)(in) = K(+)(out). Component of N-methyl-D-aspartate (NMDA) receptors (NMDARs) that function as heterotetrameric, ligand-gated cation channels with high calcium permeability and voltage-dependent block by Mg(2+). NMDARs participate in synaptic plasticity for learning and memory formation by contributing to the slow phase of excitatory postsynaptic current, long-term synaptic potentiation, and learning. Channel activation requires binding of the neurotransmitter L-glutamate to the GluN2 subunit, glycine or D-serine binding to the GluN1 subunit, plus membrane depolarization to eliminate channel inhibition by Mg(2+). NMDARs mediate simultaneously the potasium efflux and the influx of calcium and sodium. Each GluN2 subunit confers differential attributes to channel properties, including activation, deactivation and desensitization kinetics, pH sensitivity, Ca2(+) permeability, and binding to allosteric modulators. Participates in the synaptic plasticity regulation through activation by the L-glutamate releaseed by BEST1, into the synaptic cleft, upon F2R/PAR-1 activation in astrocyte. The protein is Glutamate receptor ionotropic, NMDA 2A of Pan troglodytes (Chimpanzee).